Consider the following 170-residue polypeptide: Large ribosomal subunit protein uL18c (170 aa).

The transit peptide at 1 to 63 directs the protein to the chloroplast; sequence MLASPALAGA…QADRIARHVR (63 aa).

It belongs to the universal ribosomal protein uL18 family. In terms of assembly, part of the 50S ribosomal subunit; contacts the 5S rRNA.

The protein localises to the plastid. It is found in the chloroplast. Binds 5S rRNA, forms part of the central protuberance of the 50S subunit. This Oryza sativa subsp. japonica (Rice) protein is Large ribosomal subunit protein uL18c (RPL18).